The following is a 1397-amino-acid chain: DNA-directed RNA polymerase subunit beta' (1397 aa).

Cys71, Cys73, Cys86, and Cys89 together coordinate Zn(2+). Mg(2+) contacts are provided by Asp462, Asp464, and Asp466. The Zn(2+) site is built by Cys811, Cys885, Cys892, and Cys895. The interval 1368–1397 (QNRDDKILEDQGGATPTASTEIKEPAEGAA) is disordered. A compositionally biased stretch (basic and acidic residues) spans 1388-1397 (EIKEPAEGAA).

This sequence belongs to the RNA polymerase beta' chain family. In terms of assembly, the RNAP catalytic core consists of 2 alpha, 1 beta, 1 beta' and 1 omega subunit. When a sigma factor is associated with the core the holoenzyme is formed, which can initiate transcription. The cofactor is Mg(2+). Requires Zn(2+) as cofactor.

It catalyses the reaction RNA(n) + a ribonucleoside 5'-triphosphate = RNA(n+1) + diphosphate. In terms of biological role, DNA-dependent RNA polymerase catalyzes the transcription of DNA into RNA using the four ribonucleoside triphosphates as substrates. The protein is DNA-directed RNA polymerase subunit beta' of Parvibaculum lavamentivorans (strain DS-1 / DSM 13023 / NCIMB 13966).